Here is a 364-residue protein sequence, read N- to C-terminus: D-alanine--D-alanine ligase (364 aa).

An ATP-grasp domain is found at 134–344 (KVLLKSFNIP…YESLVDKLIT (211 aa)). Position 167–222 (167–222 (NNKLNYPVIVKPSVLGSSIGINVAYNVSQIEKYIEEAFEYDLTVVVEKFIKAREIE)) interacts with ATP. D297, E311, and N313 together coordinate Mg(2+).

Belongs to the D-alanine--D-alanine ligase family. Mg(2+) serves as cofactor. Mn(2+) is required as a cofactor.

It is found in the cytoplasm. The catalysed reaction is 2 D-alanine + ATP = D-alanyl-D-alanine + ADP + phosphate + H(+). The protein operates within cell wall biogenesis; peptidoglycan biosynthesis. Cell wall formation. This is D-alanine--D-alanine ligase from Borrelia recurrentis (strain A1).